A 103-amino-acid chain; its full sequence is Matrix Gla protein (103 aa).

Positions 1–19 (MRSLLLLTVLAALVVAILC) are cleaved as a signal peptide. Position 21 is a 4-carboxyglutamate (glutamate 21). Phosphoserine is present on residues serine 22, serine 25, and serine 28. A Gla domain is found at 51-97 (MAKAQERVREQRKPAYELNREACDDYKLCERYAMVYGYNAAYNRYFR). Glutamate 56, glutamate 60, glutamate 67, and glutamate 71 each carry 4-carboxyglutamate. A disulfide bond links cysteine 73 and cysteine 79.

It belongs to the osteocalcin/matrix Gla protein family. In terms of processing, requires vitamin K-dependent gamma-carboxylation for its function.

It localises to the secreted. Functionally, associates with the organic matrix of bone and cartilage. Thought to act as an inhibitor of bone formation. The polypeptide is Matrix Gla protein (MGP) (Oryctolagus cuniculus (Rabbit)).